The following is a 194-amino-acid chain: Acid tolerance regulatory protein ActR (194 aa).

Positions 24–138 constitute a Response regulatory domain; it reads SLLIVDDDTA…DILAALIQRP (115 aa). Position 73 is a 4-aspartylphosphate (Asp73).

In terms of processing, phosphorylated by ActS.

In terms of biological role, member of the two-component regulatory system ActS/ActR acting in acid tolerance. These data implicate that a two-component sensor may be involved in pH sensing and/or response. This chain is Acid tolerance regulatory protein ActR (actR), found in Sinorhizobium medicae (strain WSM419) (Ensifer medicae).